Here is a 153-residue protein sequence, read N- to C-terminus: Small ribosomal subunit protein uS13 (153 aa).

The protein belongs to the universal ribosomal protein uS13 family. Part of the 30S ribosomal subunit. Forms a loose heterodimer with protein S19. Forms two bridges to the 50S subunit in the 70S ribosome.

Its function is as follows. Located at the top of the head of the 30S subunit, it contacts several helices of the 16S rRNA. In the 70S ribosome it contacts the 23S rRNA (bridge B1a) and protein L5 of the 50S subunit (bridge B1b), connecting the 2 subunits; these bridges are implicated in subunit movement. The chain is Small ribosomal subunit protein uS13 from Pyrobaculum islandicum (strain DSM 4184 / JCM 9189 / GEO3).